Here is a 970-residue protein sequence, read N- to C-terminus: Phosphoenolpyruvate carboxylase 1 (970 aa).

Position 15 is a phosphoserine (Ser15). Active-site residues include His177, Lys606, and Arg647.

It belongs to the PEPCase type 1 family. Homotetramer. Mg(2+) is required as a cofactor.

It is found in the cytoplasm. The catalysed reaction is oxaloacetate + phosphate = phosphoenolpyruvate + hydrogencarbonate. It functions in the pathway photosynthesis; C4 acid pathway. By light-reversible phosphorylation. Functionally, through the carboxylation of phosphoenolpyruvate (PEP) it forms oxaloacetate, a four-carbon dicarboxylic acid source for the tricarboxylic acid cycle. The sequence is that of Phosphoenolpyruvate carboxylase 1 (PEP1) from Zea mays (Maize).